A 1282-amino-acid chain; its full sequence is MSSVSPSPLIALISSECSQKHAHNRGFKSLSHFIFPFTSHECQVREPIDNLKASQRIRLDIRDISSDGHLLTLSVLPYVLIQALKTCTDVSQSIKLFRDVLARCSEPSEHESFGHYLACIFVVSTEDENPLGEFSKMIQTQQTLYNTTSTLMIPGHCSTPKWAAPHAKTPRHYILLHDSRSPRSSTERRDELLAQMCATYGNDNCQMLQLDSDSESAEMKGVWDEIDEFNDVLEKGLEEAHQHSTDAIAPGPNGASNQQSPSSPTSSVATISSTMPAVGSVSPNSHPNSTVVWKSSKKLASLADAKAVQAILSKFLDVCLIPYVEKEMRFLYETAGQKKGIGKSFTSMKRWFGSGTALSNMATPITYAWDSSEMQTRRLADLLLMFGFPNSAFEQYRGLKRDLEADKAMAAHAVALEMCCVALHSAQPQLNANQFMIKYLETPVSLLIEHAKFRRYPSILRCAFNIADIYSDLGLHKEAALNLAKVSSIEGDHLVAVAQTLAAEQFEKAGMGRKASFHRVLAANRFSNAAIPALSFDCYRLALPAFDKKHWGVLDEHLAVRLLEEGQKAGVMTTDIASECIRRLVAVCPKLSPSLQTERLRTIVNALDIYFPHRNEPVEMLTDIPKVEMETVKAIYGERPLWNEIDENEHQSVSSDGWITVERAAHHALFGASAPYRGMQLVSDEHSDNQKIRETPAGERFRVMVDLTNPLKIPIHLQNLRLSVSDIHNQSGIEGSEKSIPELGALEHLQLDPEETKTIELYVFPRVGCLKFRVDGLLFQLAVDQKDVEARVPLKCRGKRLNKTAKQQKSKIYTNDERLSATVAQKPWPLVEFRVIKSPHQWSYCDQAQRYQLEIENIGHENVMSMCLATNAFDRVAAGSIDENEHHQQFKMNLAANNAKVATFRFEEGSTSSTDSFLKIGEKKRIFFDVRSSDEPTGSTVAPKQSNTVILIAYRSSNGTMRQWRRVIDGERRRLIALTAEILDLDTKSFSIHLKNCVAVSQAALSRVEILRIRTDRNEASTGIKNDCSTTVLPSVNRRVEIESEQTDTIVARLVPLSQGETIKESWLTTTTSVTPPKWPCPAEIHSTMDDEFASKIAEKIGILWKANIVNNEGLVTSFIGESFIDDPFVKLKTLKKDDSVLSSLRISCETTAKEISHNFSASHICELPITLLIQNKDLQRRPVSVSIKLSSKVREPVDGIHLVAPENRHQMWIDRPVRKQTIGIDDEAKLEMKWKITHAAVYDVGGANLSIEAIFEGSNDAVIFKVPSVLSVVKSSSYTVV.

Residues 245–287 (TDAIAPGPNGASNQQSPSSPTSSVATISSTMPAVGSVSPNSHP) form a disordered region. The span at 255 to 273 (ASNQQSPSSPTSSVATISS) shows a compositional bias: low complexity.

Plays a role in endoplasmic reticulum to Golgi apparatus trafficking at a very early stage. Involved in collagen secretion. In Caenorhabditis elegans, this protein is Trafficking protein particle complex subunit 8.